A 342-amino-acid chain; its full sequence is Holliday junction branch migration complex subunit RuvB (342 aa).

The interval 1–22 (MTLKPVREVSPGSQEGEERLEQ) is disordered. The large ATPase domain (RuvB-L) stretch occupies residues 1 to 185 (MTLKPVREVS…FPIQERLGYY (185 aa)). ATP-binding positions include L24, R25, G66, K69, T70, S71, 132–134 (EDY), R175, Y185, and R222. Position 70 (T70) interacts with Mg(2+). The interval 186–256 (EPTELREIAV…IVETTLERLE (71 aa)) is small ATPAse domain (RuvB-S). The head domain (RuvB-H) stretch occupies residues 259–342 (GRGLDAMDRR…RPQGKQGSLI (84 aa)). DNA contacts are provided by R295, R314, and R319.

Belongs to the RuvB family. As to quaternary structure, homohexamer. Forms an RuvA(8)-RuvB(12)-Holliday junction (HJ) complex. HJ DNA is sandwiched between 2 RuvA tetramers; dsDNA enters through RuvA and exits via RuvB. An RuvB hexamer assembles on each DNA strand where it exits the tetramer. Each RuvB hexamer is contacted by two RuvA subunits (via domain III) on 2 adjacent RuvB subunits; this complex drives branch migration. In the full resolvosome a probable DNA-RuvA(4)-RuvB(12)-RuvC(2) complex forms which resolves the HJ.

It localises to the cytoplasm. It catalyses the reaction ATP + H2O = ADP + phosphate + H(+). In terms of biological role, the RuvA-RuvB-RuvC complex processes Holliday junction (HJ) DNA during genetic recombination and DNA repair, while the RuvA-RuvB complex plays an important role in the rescue of blocked DNA replication forks via replication fork reversal (RFR). RuvA specifically binds to HJ cruciform DNA, conferring on it an open structure. The RuvB hexamer acts as an ATP-dependent pump, pulling dsDNA into and through the RuvAB complex. RuvB forms 2 homohexamers on either side of HJ DNA bound by 1 or 2 RuvA tetramers; 4 subunits per hexamer contact DNA at a time. Coordinated motions by a converter formed by DNA-disengaged RuvB subunits stimulates ATP hydrolysis and nucleotide exchange. Immobilization of the converter enables RuvB to convert the ATP-contained energy into a lever motion, pulling 2 nucleotides of DNA out of the RuvA tetramer per ATP hydrolyzed, thus driving DNA branch migration. The RuvB motors rotate together with the DNA substrate, which together with the progressing nucleotide cycle form the mechanistic basis for DNA recombination by continuous HJ branch migration. Branch migration allows RuvC to scan DNA until it finds its consensus sequence, where it cleaves and resolves cruciform DNA. The protein is Holliday junction branch migration complex subunit RuvB of Anaeromyxobacter sp. (strain Fw109-5).